The following is a 130-amino-acid chain: Methylglyoxal synthase (130 aa).

Residues 1–130 enclose the MGS-like domain; that stretch reads MSKPRIALIA…DLARNMQDVC (130 aa). Substrate-binding positions include His11, Lys15, 37–40, and 57–58; these read TGTT and SG. Catalysis depends on Asp63, which acts as the Proton donor/acceptor. Residue His90 participates in substrate binding.

The protein belongs to the methylglyoxal synthase family.

The enzyme catalyses dihydroxyacetone phosphate = methylglyoxal + phosphate. In terms of biological role, catalyzes the formation of methylglyoxal from dihydroxyacetone phosphate. In Burkholderia lata (strain ATCC 17760 / DSM 23089 / LMG 22485 / NCIMB 9086 / R18194 / 383), this protein is Methylglyoxal synthase.